We begin with the raw amino-acid sequence, 127 residues long: Calcitonin receptor-stimulating peptide 2 (127 aa).

The signal sequence occupies residues 1-25 (MGFWKLSPFLAIGLLVMYQAGILQA). Residues 26–81 (APFRSALENPLESATLTEDEICVLLTAVVKDYVQMKARELQQEQETEGSSLTAQKS) constitute a propeptide that is removed on maturation. Residues 65–85 (LQQEQETEGSSLTAQKSSCKD) are disordered. Polar residues predominate over residues 72 to 81 (EGSSLTAQKS). A disulfide bridge connects residues C83 and C88.

It belongs to the calcitonin family.

It is found in the secreted. This chain is Calcitonin receptor-stimulating peptide 2 (CRSP2), found in Canis lupus familiaris (Dog).